A 253-amino-acid chain; its full sequence is ATP synthase subunit a (253 aa).

6 consecutive transmembrane segments (helical) span residues 30-50 (FTNA…VLLA), 88-108 (FFPF…IGLV), 118-138 (IAVT…YGLI), 144-164 (FLGI…MIMI), 184-204 (MLAG…LLGA), and 211-231 (VAPL…LVAF).

The protein belongs to the ATPase A chain family. As to quaternary structure, F-type ATPases have 2 components, CF(1) - the catalytic core - and CF(0) - the membrane proton channel. CF(1) has five subunits: alpha(3), beta(3), gamma(1), delta(1), epsilon(1). CF(0) has three main subunits: a(1), b(2) and c(9-12). The alpha and beta chains form an alternating ring which encloses part of the gamma chain. CF(1) is attached to CF(0) by a central stalk formed by the gamma and epsilon chains, while a peripheral stalk is formed by the delta and b chains.

The protein resides in the cell inner membrane. Key component of the proton channel; it plays a direct role in the translocation of protons across the membrane. The sequence is that of ATP synthase subunit a from Beijerinckia indica subsp. indica (strain ATCC 9039 / DSM 1715 / NCIMB 8712).